The sequence spans 399 residues: Succinate--CoA ligase [ADP-forming] subunit beta (399 aa).

The region spanning 9 to 254 (KAVLQPFGVS…TTEEDAKEIE (246 aa)) is the ATP-grasp domain. Residues lysine 46, 53–55 (GRG), glutamate 109, serine 112, and glutamate 117 contribute to the ATP site. Asparagine 209 and aspartate 223 together coordinate Mg(2+). Substrate-binding positions include asparagine 274 and 331–333 (GIM).

It belongs to the succinate/malate CoA ligase beta subunit family. Heterotetramer of two alpha and two beta subunits. Mg(2+) serves as cofactor.

It carries out the reaction succinate + ATP + CoA = succinyl-CoA + ADP + phosphate. The enzyme catalyses GTP + succinate + CoA = succinyl-CoA + GDP + phosphate. It functions in the pathway carbohydrate metabolism; tricarboxylic acid cycle; succinate from succinyl-CoA (ligase route): step 1/1. Its function is as follows. Succinyl-CoA synthetase functions in the citric acid cycle (TCA), coupling the hydrolysis of succinyl-CoA to the synthesis of either ATP or GTP and thus represents the only step of substrate-level phosphorylation in the TCA. The beta subunit provides nucleotide specificity of the enzyme and binds the substrate succinate, while the binding sites for coenzyme A and phosphate are found in the alpha subunit. The polypeptide is Succinate--CoA ligase [ADP-forming] subunit beta (Rhodopseudomonas palustris (strain BisA53)).